The chain runs to 380 residues: Septin homolog spn6 (380 aa).

A Septin-type G domain is found at 27–297 (KECGLTIMLC…ERYRREQLTN (271 aa)). The segment at 37–44 (GASGTGKT) is G1 motif. GTP-binding positions include 37–44 (GASGTGKT), T72, G98, 177–185 (KADTFTTPE), and R246. The interval 95-98 (DTPG) is G3 motif. Residues 176 to 179 (AKAD) are G4 motif. Residues 304 to 380 (KLKKEHYERL…KSYKGRGHKK (77 aa)) are a coiled coil.

The protein belongs to the TRAFAC class TrmE-Era-EngA-EngB-Septin-like GTPase superfamily. Septin GTPase family. Component of the sporulation-specific septin complex composed of at least spn2, spn5, spn6 and spn7.

The protein localises to the cytoplasm. It is found in the forespore membrane. Its function is as follows. Septin-like protein involved in the correct orientation of forespore membrane extension during sporulation. The chain is Septin homolog spn6 (spn6) from Schizosaccharomyces pombe (strain 972 / ATCC 24843) (Fission yeast).